Here is a 295-residue protein sequence, read N- to C-terminus: uncharacterized protein (295 aa).

Residues 11–25 and T101 contribute to the NAD(+) site; that span reads GYIG…MAKR. K176 is a catalytic residue. An NAD(+)-binding site is contributed by K252.

The protein belongs to the HIBADH-related family.

This is an uncharacterized protein from Mycobacterium tuberculosis (strain CDC 1551 / Oshkosh).